We begin with the raw amino-acid sequence, 241 residues long: Interleukin-6 (241 aa).

Residues 1-25 (MNFTEGCEATGRRPGSAGSRRRRAP) form a disordered region. A signal peptide spans 1 to 46 (MNFTEGCEATGRRPGSAGSRRRRAPRPGPVALLPLLLPLLLPPAAA). The cysteines at positions 122 and 132 are disulfide-linked.

Belongs to the IL-6 superfamily. In terms of assembly, component of a hexamer of two molecules each of IL6, IL6R and IL6ST; first binds to IL6R to associate with the signaling subunit IL6ST.

The protein localises to the secreted. Its function is as follows. Cytokine with a wide variety of biological functions in immunity, tissue regeneration, and metabolism. Binds to IL6R, then the complex associates to the signaling subunit IL6ST/gp130 to trigger the intracellular IL6-signaling pathway. The interaction with the membrane-bound IL6R and IL6ST stimulates 'classic signaling', whereas the binding of IL6 and soluble IL6R to IL6ST stimulates 'trans-signaling'. Alternatively, 'cluster signaling' occurs when membrane-bound IL6:IL6R complexes on transmitter cells activate IL6ST receptors on neighboring receiver cells. The protein is Interleukin-6 (IL6) of Gallus gallus (Chicken).